The primary structure comprises 52 residues: UPF0391 membrane protein Avin_10980 (52 aa).

2 helical membrane-spanning segments follow: residues 4-24 (WSII…GGIA) and 29-49 (GIAK…LLFG).

Belongs to the UPF0391 family.

It localises to the cell membrane. This chain is UPF0391 membrane protein Avin_10980, found in Azotobacter vinelandii (strain DJ / ATCC BAA-1303).